The following is a 128-amino-acid chain: Elongation factor G (128 aa).

It belongs to the GTP-binding elongation factor family. EF-G/EF-2 subfamily.

The protein localises to the cytoplasm. In terms of biological role, catalyzes the GTP-dependent ribosomal translocation step during translation elongation. During this step, the ribosome changes from the pre-translocational (PRE) to the post-translocational (POST) state as the newly formed A-site-bound peptidyl-tRNA and P-site-bound deacylated tRNA move to the P and E sites, respectively. Catalyzes the coordinated movement of the two tRNA molecules, the mRNA and conformational changes in the ribosome. The polypeptide is Elongation factor G (fusA) (Planobispora rosea).